The sequence spans 606 residues: Retrovirus-related Pol polyprotein from type-1 retrotransposable element R2 (606 aa).

Positions 1-208 (GTLANIIMLE…NTFKYLGLTF (208 aa)) constitute a Reverse transcriptase domain. The nucleic acid-binding endonuclease stretch occupies residues 331-606 (IFNIEGPARS…PPDPPRPVPP (276 aa)).

It carries out the reaction DNA(n) + a 2'-deoxyribonucleoside 5'-triphosphate = DNA(n+1) + diphosphate. The protein is Retrovirus-related Pol polyprotein from type-1 retrotransposable element R2 of Popillia japonica (Japanese beetle).